A 438-amino-acid polypeptide reads, in one-letter code: sn-glycerol-3-phosphate-binding periplasmic protein UgpB (438 aa).

Positions 1-23 are cleaved as a signal peptide; it reads MKPLHYTASALALGLALMGNAQA. Residues Tyr-65, Glu-89, Ser-144, Ser-270, Gly-307, Tyr-346, and Arg-397 each coordinate sn-glycerol 3-phosphate.

This sequence belongs to the bacterial solute-binding protein 1 family. In terms of assembly, the complex is composed of two ATP-binding proteins (UgpC), two transmembrane proteins (UgpA and UgpE) and a solute-binding protein (UgpB).

It is found in the periplasm. Functionally, part of the ABC transporter complex UgpBAEC involved in sn-glycerol-3-phosphate (G3P) import. Binds G3P. In Shigella flexneri, this protein is sn-glycerol-3-phosphate-binding periplasmic protein UgpB (ugpB).